The sequence spans 1050 residues: Self-sufficient cytochrome P450 monooxygenase CYP505E5 (1050 aa).

Cys-405 lines the heme pocket. The disordered stretch occupies residues 461–495; sequence TATGLSRRSMLVARDGSSEESSNHPAEARGDHAPA. The Flavodoxin-like domain occupies 500–641; it reads VSFFYGSNSG…DLEAWEETSL (142 aa). Residues 506 to 510 and 585 to 617 contribute to the FMN site; these read SNSGT and VFGC…TRLA. The FAD-binding FR-type domain maps to 679–907; sequence KGLIEAKVTA…RPAKETFHLP (229 aa).

It in the N-terminal section; belongs to the cytochrome P450 family. The cofactor is FAD. FMN is required as a cofactor. Requires heme as cofactor.

The enzyme catalyses 2 oxidized [cytochrome P450] + NADPH = 2 reduced [cytochrome P450] + NADP(+) + H(+). It carries out the reaction an organic molecule + reduced [NADPH--hemoprotein reductase] + O2 = an alcohol + oxidized [NADPH--hemoprotein reductase] + H2O + H(+). The catalysed reaction is dodecanoate + reduced [NADPH--hemoprotein reductase] + O2 = 5-hydroxydodecanoate + oxidized [NADPH--hemoprotein reductase] + H2O + H(+). It catalyses the reaction tetradecanoate + reduced [NADPH--hemoprotein reductase] + O2 = 7-hydroxytetradecanoate + oxidized [NADPH--hemoprotein reductase] + H2O + H(+). The enzyme catalyses dodecan-1-ol + reduced [NADPH--hemoprotein reductase] + O2 = 1,5-dodecanediol + oxidized [NADPH--hemoprotein reductase] + H2O + H(+). It carries out the reaction dodecan-1-ol + reduced [NADPH--hemoprotein reductase] + O2 = 1,4-dodecanediol + oxidized [NADPH--hemoprotein reductase] + H2O + H(+). The catalysed reaction is dodecan-1-ol + reduced [NADPH--hemoprotein reductase] + O2 = 1,6-dodecanediol + oxidized [NADPH--hemoprotein reductase] + H2O + H(+). Functionally, self-sufficient cytochrome P450 monooxygenase that catalyzes the regioselective in-chain hydroxylation of alkanes, fatty alcohols, and fatty acids at the omega-7 position. Performs hydroxylation of C10-C16 n-alkanes and C12 and C14 fatty alcohols; and thereby enables the one step biocatalytic synthesis of rare alcohols such as 5-dodecanol and 7-tetradecanol. Converts 1-dodecanol into 1,5-dodecanediol as major product with very little sub-terminally hydroxylated products with the 1,4-dodecanediol and 1,6-dodecanediol more abundant. Converts dodecanoic acid to 5-hydroxydodecanoic acid which can be further converted into delta-dodecalactone by lactonization of the 5-hydroxy acid at low pH. Also gives sub-terminal hydroxylation of dodecanoic acid with 9-hydroxydodecanoic acid being the second most abundant product. The sequence is that of Self-sufficient cytochrome P450 monooxygenase CYP505E5 from Aspergillus kawachii (strain NBRC 4308) (White koji mold).